Reading from the N-terminus, the 164-residue chain is Phosphopantetheine adenylyltransferase (164 aa).

Ser9 is a binding site for substrate. Residues 9–10 (SF) and His17 contribute to the ATP site. Residues Lys41, Leu73, and Lys87 each contribute to the substrate site. ATP contacts are provided by residues 88 to 90 (GLR), Glu98, and 123 to 129 (YSYLSSS).

This sequence belongs to the bacterial CoaD family. In terms of assembly, homohexamer. The cofactor is Mg(2+).

The protein localises to the cytoplasm. The catalysed reaction is (R)-4'-phosphopantetheine + ATP + H(+) = 3'-dephospho-CoA + diphosphate. It participates in cofactor biosynthesis; coenzyme A biosynthesis; CoA from (R)-pantothenate: step 4/5. In terms of biological role, reversibly transfers an adenylyl group from ATP to 4'-phosphopantetheine, yielding dephospho-CoA (dPCoA) and pyrophosphate. This Clostridium botulinum (strain ATCC 19397 / Type A) protein is Phosphopantetheine adenylyltransferase.